The following is a 372-amino-acid chain: MLDISLIMLGAGNSSRFELPVKKQWLRIGSDPLWLFATKNLSNFYTFKEIIVVSKECKYMSKFAPNYKFVDGGETRQDSLKNALELVSSEFVLVSDIARPCISSELFHKIIEAAAQADCVVPALKIADTAYLGENAIDREKVKLIQTPQLSRTTLLKKALSSGEIYTDDSSAMRAIGASVWHILGDEMARKITFKEDLVKISALKAPENELFVGSGFDVHEFEKGRPLVLCGEKIDYEFGLKAHSDGDVALHALTDAILGAAGLGDIGELFPDTDDKFKDISSIYLLQEAYKRVQSVGFVLTNADITIMAQKPKLSKLKSKMEANIAQALNLSQSRINVKATTTEGLGFVGRCEGIAVMASASLKFYNWTQI.

The 2-C-methyl-D-erythritol 4-phosphate cytidylyltransferase stretch occupies residues 1–211 (MLDISLIMLG…SALKAPENEL (211 aa)). The interval 212–372 (FVGSGFDVHE…SLKFYNWTQI (161 aa)) is 2-C-methyl-D-erythritol 2,4-cyclodiphosphate synthase. The a divalent metal cation site is built by Asp-218 and His-220. Residues 218 to 220 (DVH) and 244 to 245 (HS) contribute to the 4-CDP-2-C-methyl-D-erythritol 2-phosphate site. His-252 lines the a divalent metal cation pocket. 4-CDP-2-C-methyl-D-erythritol 2-phosphate contacts are provided by residues 266-268 (DIG), 271-275 (FPDTD), 342-345 (TTTE), Phe-349, and Arg-352.

This sequence in the N-terminal section; belongs to the IspD/TarI cytidylyltransferase family. IspD subfamily. It in the C-terminal section; belongs to the IspF family. The cofactor is a divalent metal cation.

The enzyme catalyses 2-C-methyl-D-erythritol 4-phosphate + CTP + H(+) = 4-CDP-2-C-methyl-D-erythritol + diphosphate. The catalysed reaction is 4-CDP-2-C-methyl-D-erythritol 2-phosphate = 2-C-methyl-D-erythritol 2,4-cyclic diphosphate + CMP. Its pathway is isoprenoid biosynthesis; isopentenyl diphosphate biosynthesis via DXP pathway; isopentenyl diphosphate from 1-deoxy-D-xylulose 5-phosphate: step 2/6. It functions in the pathway isoprenoid biosynthesis; isopentenyl diphosphate biosynthesis via DXP pathway; isopentenyl diphosphate from 1-deoxy-D-xylulose 5-phosphate: step 4/6. Functionally, bifunctional enzyme that catalyzes the formation of 4-diphosphocytidyl-2-C-methyl-D-erythritol from CTP and 2-C-methyl-D-erythritol 4-phosphate (MEP) (IspD), and catalyzes the conversion of 4-diphosphocytidyl-2-C-methyl-D-erythritol 2-phosphate (CDP-ME2P) to 2-C-methyl-D-erythritol 2,4-cyclodiphosphate (ME-CPP) with a corresponding release of cytidine 5-monophosphate (CMP) (IspF). In Campylobacter concisus (strain 13826), this protein is Bifunctional enzyme IspD/IspF.